The sequence spans 64 residues: Toxin BmCa-1 (64 aa).

Residues 1 to 18 (MNTFVVVFLLLTAILCHA) form the signal peptide. A propeptide spanning residues 19–27 (EHALDETAR) is cleaved from the precursor. 3 disulfides stabilise this stretch: cysteine 29-cysteine 43, cysteine 36-cysteine 49, and cysteine 42-cysteine 58.

Belongs to the scorpion calcin-like family. In terms of tissue distribution, expressed by the venom gland.

It localises to the secreted. May increase intracellular calcium release through the activation of nuclear inositol 1,4,5-trisphosphate receptors (ITPR) of cardiomyocytes, thereby causing an increase in the contraction frequency of these cells. In Olivierus martensii (Manchurian scorpion), this protein is Toxin BmCa-1.